A 117-amino-acid chain; its full sequence is Large ribosomal subunit protein uL22 (117 aa).

The protein belongs to the universal ribosomal protein uL22 family. As to quaternary structure, part of the 50S ribosomal subunit.

This protein binds specifically to 23S rRNA; its binding is stimulated by other ribosomal proteins, e.g. L4, L17, and L20. It is important during the early stages of 50S assembly. It makes multiple contacts with different domains of the 23S rRNA in the assembled 50S subunit and ribosome. In terms of biological role, the globular domain of the protein is located near the polypeptide exit tunnel on the outside of the subunit, while an extended beta-hairpin is found that lines the wall of the exit tunnel in the center of the 70S ribosome. This is Large ribosomal subunit protein uL22 from Lactobacillus gasseri (strain ATCC 33323 / DSM 20243 / BCRC 14619 / CIP 102991 / JCM 1131 / KCTC 3163 / NCIMB 11718 / NCTC 13722 / AM63).